The chain runs to 600 residues: CoA ligase FVEG_12633 (600 aa).

Residues 170–174, H214, 321–323, and 342–343 each bind ATP; these read TSGTT, AAL, and ER. The SBD1 stretch occupies residues 241-342; the sequence is NSVWTRLAAP…QLTGGNVLLE (102 aa). Positions 343 to 420 are SBD2; that stretch reads RYGMTEVGMA…LRGPTVFTGY (78 aa). M346 contributes to the substrate binding site. Residues T347, D441, R471, and K564 each coordinate ATP. K564 is a binding site for oxalate.

It belongs to the ATP-dependent AMP-binding enzyme family.

CoA ligase; part of the Fusarium detoxification of benzoxazolinone cluster 2 (FDB2) involved in the degradation of benzoxazolinones produced by the host plant. Maize, wheat, and rye produce the 2 benzoxazinone phytoanticipins 2,4-dihy-droxy-7-methoxy-1,4-benzoxazin-3-one (DIMBOA) and 2,4-dihydroxy-1,4-benzoxazin-3-one (DIBOA) that, due to their inherent instability once released, spontaneously degrade to the more stable corresponding benzoxazolinones, 6-methoxy-2-benzoxazolinone (MBOA) and 2-benzoxazolinone (BOA), respectively. The first step in the detoxification of benzoxazolinones involves the hydrolysis of the cyclic ester bond of benzoxazolinones by the FDB1 cluster gamma-lactamase MBL1 to aminophenols. MBL1 is able to convert BOA into 2-aminophenol (2-AP), as well as MBOA into 5-methoxy-2-aminophenol (2-AMP). The FDB2 cluster N-malonyltransferase FDB2/NAT1 then metabolizes aminophenols via N-malonylation to non-toxic malonamic acids. FDB2/NAT1 converts 2-AP into N-(2-hydroxyphenyl) malonamic acid (HPMA) and 2-AMP into N-(2-hydroxy-4-methoxyphenyl) malonamic acid (HMPMA). The duplicated dienlactone hydrolases DLH1 and DLH2 may provide redundant function for hydrolyzing the lactone moiety in the BOA molecule. The roles of the amidases an other enzymes encoded by the 2 FDB clusters have not been identified so far. The chain is CoA ligase FVEG_12633 from Gibberella moniliformis (strain M3125 / FGSC 7600) (Maize ear and stalk rot fungus).